Here is a 25-residue protein sequence, read N- to C-terminus: Caerin-2.5 (25 aa).

In terms of tissue distribution, expressed by the skin parotoid and/or rostral glands.

The protein resides in the secreted. Antibacterial peptide, that adopts an alpha helical conformation which can disrupt bacterial membranes. Each caerin displays a different antimicrobial specificity. The protein is Caerin-2.5 of Ranoidea gilleni (Centralian tree frog).